The sequence spans 174 residues: Squamosa promoter-binding-like protein 4 (174 aa).

The interval 1-42 (MEGKRSQGQGYMKKKSYLVEEDMETDTDEEEEVGRDRVRGSR) is disordered. The segment covering 19–33 (VEEDMETDTDEEEEV) has biased composition (acidic residues). An SBP-type zinc finger spans residues 51 to 128 (LRLCQVDRCT…AGHNERRRKS (78 aa)). C54, C59, C76, H79, C95, C98, H102, and C114 together coordinate Zn(2+). The Bipartite nuclear localization signal motif lies at 111 to 127 (KRSCRRRLAGHNERRRK). A compositionally biased stretch (basic residues) spans 118–127 (LAGHNERRRK). Disordered regions lie at residues 118–148 (LAGH…GQVV) and 155–174 (SRVE…PQIR). Over residues 163 to 174 (MPNSSFKRPQIR) the composition is skewed to polar residues.

It depends on Zn(2+) as a cofactor. In terms of tissue distribution, expressed in the rib meristem and inter-primordial tissue of the inflorescence apex.

The protein localises to the nucleus. Its subcellular location is the cytoplasm. Trans-acting factor that binds specifically to the consensus nucleotide sequence 5'-TNCGTACAA-3' of AP1 promoter. Promotes both vegetative phase change and flowering. In Arabidopsis thaliana (Mouse-ear cress), this protein is Squamosa promoter-binding-like protein 4 (SPL4).